Consider the following 238-residue polypeptide: 1-(5-phosphoribosyl)-5-[(5-phosphoribosylamino)methylideneamino] imidazole-4-carboxamide isomerase (238 aa).

The active-site Proton acceptor is aspartate 8. Residue aspartate 130 is the Proton donor of the active site.

It belongs to the HisA/HisF family.

It is found in the cytoplasm. The enzyme catalyses 1-(5-phospho-beta-D-ribosyl)-5-[(5-phospho-beta-D-ribosylamino)methylideneamino]imidazole-4-carboxamide = 5-[(5-phospho-1-deoxy-D-ribulos-1-ylimino)methylamino]-1-(5-phospho-beta-D-ribosyl)imidazole-4-carboxamide. Its pathway is amino-acid biosynthesis; L-histidine biosynthesis; L-histidine from 5-phospho-alpha-D-ribose 1-diphosphate: step 4/9. This is 1-(5-phosphoribosyl)-5-[(5-phosphoribosylamino)methylideneamino] imidazole-4-carboxamide isomerase from Methanococcus maripaludis (strain C6 / ATCC BAA-1332).